Consider the following 246-residue polypeptide: TATA-box-binding protein (246 aa).

The disordered stretch occupies residues 1–27 (MSSDKTSQQTFKLAPNNSVAQSNSIDQ). 2 consecutive repeat copies span residues 53-129 (LQNI…AKII) and 143-220 (IQNI…YWVL).

It belongs to the TBP family. As to quaternary structure, belongs to the TFIID complex together with the TBP-associated factors (TAFs). Binds DNA as monomer.

It localises to the nucleus. General transcription factor that functions at the core of the DNA-binding multiprotein factor TFIID. Binding of TFIID to the TATA box is the initial transcriptional step of the pre-initiation complex (PIC), playing a role in the activation of eukaryotic genes transcribed by RNA polymerase II. This chain is TATA-box-binding protein, found in Tetrahymena thermophila.